The chain runs to 304 residues: UDP-3-O-acyl-N-acetylglucosamine deacetylase (304 aa).

The Zn(2+) site is built by H78, H237, and D241. The Proton donor role is filled by H264.

The protein belongs to the LpxC family. Requires Zn(2+) as cofactor.

It carries out the reaction a UDP-3-O-[(3R)-3-hydroxyacyl]-N-acetyl-alpha-D-glucosamine + H2O = a UDP-3-O-[(3R)-3-hydroxyacyl]-alpha-D-glucosamine + acetate. The protein operates within glycolipid biosynthesis; lipid IV(A) biosynthesis; lipid IV(A) from (3R)-3-hydroxytetradecanoyl-[acyl-carrier-protein] and UDP-N-acetyl-alpha-D-glucosamine: step 2/6. In terms of biological role, catalyzes the hydrolysis of UDP-3-O-myristoyl-N-acetylglucosamine to form UDP-3-O-myristoylglucosamine and acetate, the committed step in lipid A biosynthesis. This is UDP-3-O-acyl-N-acetylglucosamine deacetylase from Marinobacter nauticus (strain ATCC 700491 / DSM 11845 / VT8) (Marinobacter aquaeolei).